Consider the following 959-residue polypeptide: MTQNLSQLEHNDAFIQRHIGSSVEQQQQMLAAVGASSLSTLIQQIVPADIQLPGPPPVGEAATEHQALAELKGIASQNQCYKSYIGMGYSPVLTPPVILRNMLENPGWYTAYTPYQPEVSQGRLEALLNFQQLTQDLTGLDLASASLLDEATAAAESMALAKRASKLKDANRFFVADDVHPQTLDVVLTRAETFGFDVIVDRAEKVLELDGIFGVLLQQVGTTGELHDYSALLAELKKRKIITSVAADIMALVLLTAPGAQGADVVFGSAQRFGVPMGYGGPHAAFFACRDEFKRSMPGRIIGVSRDAAGNTALRMAMQTREQHIRREKANSNICTSQVLLANIASLYAVYHGPQGLQRIAGRIHRMTDILAAGLQHAGLTLRFKHWFDTLTVEVKDKAAVLARALSFGINLRTDIHGAVGITLNETTSREDIQTLFALFVGDNHGLDIDQLDAAVSQHSQSIQDSMLRRDPILTHPVFNRYHSETEMMRYMHRLERKDLALNQAMIPLGSCTMKLNAAAEMIPITWPEFAELHPFCPPEQAAGYQQMIGQLSQWLVQLTGYDAVCMQPNSGAQGEYAGLLAIRRYHESRNQANRHICLIPSSAHGTNPASAQMAGMSVVVVACDKQGNIDLHDLRQKAEHAGDELSCIMVTYPSTHGVYEETIREVCQIVHQFGGQVYLDGANMNAQVGITTPGYIGADVSHLNLHKTFCIPHGGGGPGMGPIGVKAHLAPFVPGHSVVQIDGMTTQQGAVSAAPFGSASILPISWMYIRMMGADGLKQASQVAILNANYIATRLKNAYPVLYTGHDGRVAHECILDIRPLKEATGISEMDIAKRLIDFGFHAPTMSFPVAGTLMVEPTESESKVELDRFIDAMLAIRAEIEKVAQGEWPLEDNPLVNAPHTQAELVGEWTHPYSRELAVFPVAGVLENKYWPTVKRLDDVYGDRNLFCSCVPISDYE.

Lysine 708 is subject to N6-(pyridoxal phosphate)lysine.

It belongs to the GcvP family. As to quaternary structure, the glycine cleavage system is composed of four proteins: P, T, L and H. The cofactor is pyridoxal 5'-phosphate.

The enzyme catalyses N(6)-[(R)-lipoyl]-L-lysyl-[glycine-cleavage complex H protein] + glycine + H(+) = N(6)-[(R)-S(8)-aminomethyldihydrolipoyl]-L-lysyl-[glycine-cleavage complex H protein] + CO2. In terms of biological role, the glycine cleavage system catalyzes the degradation of glycine. The P protein binds the alpha-amino group of glycine through its pyridoxal phosphate cofactor; CO(2) is released and the remaining methylamine moiety is then transferred to the lipoamide cofactor of the H protein. The protein is Glycine dehydrogenase (decarboxylating) of Yersinia pseudotuberculosis serotype O:1b (strain IP 31758).